The primary structure comprises 389 residues: Agamous-like MADS-box protein AGL65 (389 aa).

Residues 1 to 61 (MGRVKLKIKR…GRATAFHGEH (61 aa)) form the MADS-box domain. Coiled-coil stretches lie at residues 77 to 131 (QERT…LMEC) and 293 to 325 (GMEE…QQQD). The tract at residues 310-343 (NLQQQQQQQQQQQQQDPSMYDPMANNNGGCFQIP) is disordered. Low complexity predominate over residues 312-324 (QQQQQQQQQQQQQ).

In terms of assembly, forms a heterodimer with AGL104. Expressed in pollen.

The protein localises to the nucleus. Probable transcription factor that forms a heterodimer with the MADS-box protein AGL104 and is involved in the regulation of pollen maturation at the late stages of pollen development and pollen tube growth. The sequence is that of Agamous-like MADS-box protein AGL65 from Arabidopsis thaliana (Mouse-ear cress).